The chain runs to 150 residues: Large ribosomal subunit protein bL9 (150 aa).

This sequence belongs to the bacterial ribosomal protein bL9 family.

In terms of biological role, binds to the 23S rRNA. This is Large ribosomal subunit protein bL9 from Pseudarthrobacter chlorophenolicus (strain ATCC 700700 / DSM 12829 / CIP 107037 / JCM 12360 / KCTC 9906 / NCIMB 13794 / A6) (Arthrobacter chlorophenolicus).